A 446-amino-acid chain; its full sequence is Histidine--tRNA ligase (446 aa).

Belongs to the class-II aminoacyl-tRNA synthetase family. As to quaternary structure, homodimer.

The protein localises to the cytoplasm. It carries out the reaction tRNA(His) + L-histidine + ATP = L-histidyl-tRNA(His) + AMP + diphosphate + H(+). This chain is Histidine--tRNA ligase, found in Paraburkholderia phytofirmans (strain DSM 17436 / LMG 22146 / PsJN) (Burkholderia phytofirmans).